The following is a 158-amino-acid chain: N-acetylgalactosamine-specific phosphotransferase enzyme IIB component 1 (158 aa).

Positions 1-158 (MTSPNILLTR…PGDQKEQIPD (158 aa)) constitute a PTS EIIB type-4 domain. Catalysis depends on H17, which acts as the Pros-phosphohistidine intermediate.

The protein localises to the cytoplasm. Functionally, the phosphoenolpyruvate-dependent sugar phosphotransferase system (sugar PTS), a major carbohydrate active -transport system, catalyzes the phosphorylation of incoming sugar substrates concomitantly with their translocation across the cell membrane. This system is involved in N-acetylgalactosamine transport. The polypeptide is N-acetylgalactosamine-specific phosphotransferase enzyme IIB component 1 (agaB) (Escherichia coli (strain K12)).